Here is a 267-residue protein sequence, read N- to C-terminus: Small ribosomal subunit protein eS4 (267 aa).

An S4 RNA-binding domain is found at 42 to 104; the sequence is LPLILVLRNR…TKENFRLLFD (63 aa).

This sequence belongs to the eukaryotic ribosomal protein eS4 family.

Its subcellular location is the cytoplasm. The chain is Small ribosomal subunit protein eS4 (rps4) from Dictyostelium discoideum (Social amoeba).